Here is a 555-residue protein sequence, read N- to C-terminus: Polypyrimidine tract-binding protein 1 (555 aa).

At methionine 1 the chain carries N-acetylmethionine. Serine 16 carries the post-translational modification Phosphoserine. 3 RRM domains span residues 58-142 (RVIH…SSPN), 183-259 (LRII…FSKL), and 361-412 (SVLL…SQAQ). A Glycyl lysine isopeptide (Lys-Gly) (interchain with G-Cter in SUMO2) cross-link involves residue lysine 64. Phosphotyrosine is present on tyrosine 126. A Phosphothreonine modification is found at threonine 137. Position 140 is a phosphoserine (serine 140). Residue lysine 217 forms a Glycyl lysine isopeptide (Lys-Gly) (interchain with G-Cter in SUMO2) linkage. The disordered stretch occupies residues 435–457 (HQSVQLPREGQEDQGLTKDYGSS). A Phosphoserine modification is found at serine 457. One can recognise an RRM 4 domain in the interval 478–553 (ATLHLSNIPP…HHLRVSFSKS (76 aa)).

Monomer. Part of a ternary complex containing KHSRP, PTBP1, PTBP2 and HNRPH1. Interacts with SFPQ. Interacts with RAVER1. Interacts with IVNS1ABP (via BACK domain); the interaction is direct. Expressed in myoblast; expression gradually decreases during muscle cell differentiation (at protein level).

Its subcellular location is the nucleus. Its function is as follows. Plays a role in pre-mRNA splicing and in the regulation of alternative splicing events. Activates exon skipping of its own pre-mRNA during muscle cell differentiation. Binds to the polypyrimidine tract of introns. May promote RNA looping when bound to two separate polypyrimidine tracts in the same pre-mRNA. May promote the binding of U2 snRNP to pre-mRNA. Cooperates with RAVER1 to modulate switching between mutually exclusive exons during maturation of the TPM1 pre-mRNA. Represses the splicing of MAPT/Tau exon 10. Binds to polypyrimidine-rich controlling element (PCE) of CFTR and promotes exon skipping of CFTR exon 9, thereby antagonizing TIA1 and its role in exon inclusion of CFTR exon 9. Plays a role in the splicing of pyruvate kinase PKM by binding repressively to a polypyrimidine tract flanking PKM exon 9, inhibiting exon 9 inclusion and resulting in exon 10 inclusion and production of the PKM M2 isoform. This is Polypyrimidine tract-binding protein 1 (Ptbp1) from Mus musculus (Mouse).